Consider the following 314-residue polypeptide: DNA-directed RNA polymerase subunit alpha (314 aa).

Residues 1 to 229 form an alpha N-terminal domain (alpha-NTD) region; it reads MLESKLKAPV…EHLNYFANPE (229 aa). The interval 246–314 is alpha C-terminal domain (alpha-CTD); sequence SAEEDLDLPL…LAKKGFTLKE (69 aa).

It belongs to the RNA polymerase alpha chain family. As to quaternary structure, homodimer. The RNAP catalytic core consists of 2 alpha, 1 beta, 1 beta' and 1 omega subunit. When a sigma factor is associated with the core the holoenzyme is formed, which can initiate transcription.

It catalyses the reaction RNA(n) + a ribonucleoside 5'-triphosphate = RNA(n+1) + diphosphate. Functionally, DNA-dependent RNA polymerase catalyzes the transcription of DNA into RNA using the four ribonucleoside triphosphates as substrates. This chain is DNA-directed RNA polymerase subunit alpha (rpoA), found in Thermus aquaticus.